A 90-amino-acid chain; its full sequence is Small ribosomal subunit protein uS17 (90 aa).

It belongs to the universal ribosomal protein uS17 family. Part of the 30S ribosomal subunit.

Its function is as follows. One of the primary rRNA binding proteins, it binds specifically to the 5'-end of 16S ribosomal RNA. This Burkholderia cenocepacia (strain ATCC BAA-245 / DSM 16553 / LMG 16656 / NCTC 13227 / J2315 / CF5610) (Burkholderia cepacia (strain J2315)) protein is Small ribosomal subunit protein uS17.